We begin with the raw amino-acid sequence, 473 residues long: Nitrogenase vanadium-iron protein alpha chain (473 aa).

[8Fe-7S] cluster contacts are provided by cysteine 49, cysteine 74, and cysteine 137. Positions 256 and 422 each coordinate [7Fe-V-9S-C-homocitryl] cluster.

Belongs to the NifD/NifK/NifE/NifN family. In terms of assembly, hexamer of two alpha, two beta, and two delta chains. The cofactor is [8Fe-7S] cluster. [7Fe-V-9S-C-homocitryl] cluster serves as cofactor.

The enzyme catalyses N2 + 8 reduced [2Fe-2S]-[ferredoxin] + 16 ATP + 16 H2O = H2 + 8 oxidized [2Fe-2S]-[ferredoxin] + 2 NH4(+) + 16 ADP + 16 phosphate + 6 H(+). In terms of biological role, this vanadium-iron protein is part of the nitrogenase complex that catalyzes the key enzymatic reactions in nitrogen fixation. The protein is Nitrogenase vanadium-iron protein alpha chain (vnfD) of Azotobacter chroococcum mcd 1.